The following is a 50-amino-acid chain: Large ribosomal subunit protein bL33B (50 aa).

Belongs to the bacterial ribosomal protein bL33 family.

This Enterococcus faecalis (strain ATCC 700802 / V583) protein is Large ribosomal subunit protein bL33B (rpmG2).